We begin with the raw amino-acid sequence, 222 residues long: Ribose-5-phosphate isomerase A (222 aa).

Residues 28-31, 81-84, and 94-97 each bind substrate; these read TGST, DGAD, and KGGG. Residue Glu-103 is the Proton acceptor of the active site. Lys-121 is a binding site for substrate.

The protein belongs to the ribose 5-phosphate isomerase family. Homodimer.

It catalyses the reaction aldehydo-D-ribose 5-phosphate = D-ribulose 5-phosphate. Its pathway is carbohydrate degradation; pentose phosphate pathway; D-ribose 5-phosphate from D-ribulose 5-phosphate (non-oxidative stage): step 1/1. Its function is as follows. Catalyzes the reversible conversion of ribose-5-phosphate to ribulose 5-phosphate. The polypeptide is Ribose-5-phosphate isomerase A (Azoarcus sp. (strain BH72)).